A 287-amino-acid chain; its full sequence is 4,4'-diapophytoene synthase (287 aa).

(2E,6E)-farnesyl diphosphate is bound by residues 18 to 21 (HSKS), tyrosine 41, and arginine 45. The Mg(2+) site is built by aspartate 48 and aspartate 52. Glutamine 165 contributes to the (2E,6E)-farnesyl diphosphate binding site. Asparagine 168 contacts Mg(2+). Arginine 171 contributes to the (2E,6E)-farnesyl diphosphate binding site. Mg(2+) is bound at residue aspartate 172. Tyrosine 248 provides a ligand contact to (2E,6E)-farnesyl diphosphate.

This sequence belongs to the phytoene/squalene synthase family. CrtM subfamily. The cofactor is Mg(2+).

It carries out the reaction 2 (2E,6E)-farnesyl diphosphate = 15-cis-4,4'-diapophytoene + 2 diphosphate. The protein operates within carotenoid biosynthesis; staphyloxanthin biosynthesis; staphyloxanthin from farnesyl diphosphate: step 1/5. Involved in the biosynthesis of the yellow-orange carotenoid staphyloxanthin, which plays a role in the virulence via its protective function against oxidative stress. Catalyzes the head-to-head condensation of two molecules of farnesyl diphosphate (FPP) into the colorless C(30) carotenoid 4,4'-diapophytoene (dehydrosqualene). The protein is 4,4'-diapophytoene synthase (crtM) of Staphylococcus aureus (strain bovine RF122 / ET3-1).